The following is a 425-amino-acid chain: Glucose-1-phosphate adenylyltransferase (425 aa).

Alpha-D-glucose 1-phosphate contacts are provided by residues tyrosine 110, glycine 175, 190–191 (EK), and serine 208.

It belongs to the bacterial/plant glucose-1-phosphate adenylyltransferase family. In terms of assembly, homotetramer.

It carries out the reaction alpha-D-glucose 1-phosphate + ATP + H(+) = ADP-alpha-D-glucose + diphosphate. It participates in glycan biosynthesis; glycogen biosynthesis. Its function is as follows. Involved in the biosynthesis of ADP-glucose, a building block required for the elongation reactions to produce glycogen. Catalyzes the reaction between ATP and alpha-D-glucose 1-phosphate (G1P) to produce pyrophosphate and ADP-Glc. In Nitrosospira multiformis (strain ATCC 25196 / NCIMB 11849 / C 71), this protein is Glucose-1-phosphate adenylyltransferase.